A 215-amino-acid chain; its full sequence is MKFFLDTANVEKIKEFNALGLVDGVTTNPSLIKKEGRDFYEVIKEICAIVDGPVSAEVIALDAEGMVKEARELVKLAENVVVKIPMTKEGMKAVNILSKEGIKTNVTLIFSANQALLAAKAGASYVSPFVGRLDDVGQDGMFLISEVMQVFSAYGIETEVIVASVRHPIHVIESAKMGADIATIPFDVLDKLFNHPLTDNGIEKFLADWEAHMNR.

Catalysis depends on Lys-83, which acts as the Schiff-base intermediate with substrate.

Belongs to the transaldolase family. Type 3B subfamily.

Its subcellular location is the cytoplasm. The enzyme catalyses D-sedoheptulose 7-phosphate + D-glyceraldehyde 3-phosphate = D-erythrose 4-phosphate + beta-D-fructose 6-phosphate. Its pathway is carbohydrate degradation; pentose phosphate pathway; D-glyceraldehyde 3-phosphate and beta-D-fructose 6-phosphate from D-ribose 5-phosphate and D-xylulose 5-phosphate (non-oxidative stage): step 2/3. Functionally, transaldolase is important for the balance of metabolites in the pentose-phosphate pathway. This is Probable transaldolase from Methanococcus maripaludis (strain C7 / ATCC BAA-1331).